Reading from the N-terminus, the 175-residue chain is Bifunctional protein PyrR (175 aa).

Residues 97 to 109 (IVLIDDVLFTGRT) carry the PRPP-binding motif.

The protein belongs to the purine/pyrimidine phosphoribosyltransferase family. PyrR subfamily. Homodimer and homohexamer; in equilibrium.

The catalysed reaction is UMP + diphosphate = 5-phospho-alpha-D-ribose 1-diphosphate + uracil. Functionally, regulates transcriptional attenuation of the pyrimidine nucleotide (pyr) operon by binding in a uridine-dependent manner to specific sites on pyr mRNA. This disrupts an antiterminator hairpin in the RNA and favors formation of a downstream transcription terminator, leading to a reduced expression of downstream genes. In terms of biological role, also displays a weak uracil phosphoribosyltransferase activity which is not physiologically significant. The polypeptide is Bifunctional protein PyrR (Leuconostoc citreum (strain KM20)).